Here is a 656-residue protein sequence, read N- to C-terminus: Pyoverdine export ATP-binding/permease protein PvdT (656 aa).

One can recognise an ABC transporter domain in the interval 6-245 (IDLRAIRKSY…SANPAALQAV (240 aa)). An ATP-binding site is contributed by 43–50 (GASGSGKS). The next 4 membrane-spanning stretches (helical) occupy residues 284–304 (ALTL…LAVG), 538–558 (IAAI…LMTV), 589–609 (LSVV…AALL), and 619–639 (VPAV…FGFM).

This sequence belongs to the ABC transporter superfamily. Macrolide exporter (TC 3.A.1.122) family. As to quaternary structure, part of the tripartite efflux system PvdRT-OpmQ, which is composed of an inner membrane component with both ATPase and permease domains, PvdT, a periplasmic membrane fusion protein, PvdR, and an outer membrane component, OpmQ.

The protein localises to the cell inner membrane. Functionally, part of the tripartite efflux system PvdRT-OpmQ required for the secretion into the extracellular milieu of the siderophore pyoverdine (PVD), which is involved in iron acquisition. This subunit binds PVD and drives its secretion by hydrolyzing ATP. The system is responsible for export of newly synthesized PVD after the final steps of biosynthesis have taken place in the periplasm. It is also responsible for recycling of PVD after internalization of ferri-PVD into the periplasm by the outer-membrane receptor FpvA and release of iron from PVD, thus making PVD available for new cycles of iron uptake. This chain is Pyoverdine export ATP-binding/permease protein PvdT, found in Pseudomonas savastanoi pv. phaseolicola (strain 1448A / Race 6) (Pseudomonas syringae pv. phaseolicola (strain 1448A / Race 6)).